The following is a 136-amino-acid chain: MARTKQTARKSTGVKAPRKQLATKAARKSAPVSGGVKKPHKFRPGTVALREIRKYQKTTDLLIRKLPFQRLVRDIAMEMKNDIRFQSQAILALQEAAEAYLVGLFEDTNLCAIHARRVTIMTKDMQLARRIRGERF.

Residues 1 to 41 form a disordered region; that stretch reads MARTKQTARKSTGVKAPRKQLATKAARKSAPVSGGVKKPHK.

It belongs to the histone H3 family. As to quaternary structure, the nucleosome is a histone octamer containing two molecules each of H2A, H2B, H3 and H4 assembled in one H3-H4 heterotetramer and two H2A-H2B heterodimers. The octamer wraps approximately 147 bp of DNA. In terms of processing, acetylated. Acetylation occurs almost exclusively in the MAC.

The protein resides in the nucleus. The protein localises to the chromosome. In terms of biological role, macronuclear replacement variant which replaces conventional H3 in a subset of nucleosomes. Nucleosomes wrap and compact DNA into chromatin, limiting DNA accessibility to the cellular machineries which require DNA as a template. Histones thereby play a central role in transcription regulation, DNA repair, DNA replication and chromosomal stability. DNA accessibility is regulated via a complex set of post-translational modifications of histones, also called histone code, and nucleosome remodeling. Functions redundantly to H3.4. H3.3 deposition into chromatin is mainly transcription-associated and DNA replication-independent, but it can also enter a replication-coupled pathway. Although not essential for vegetative growth, minor H3 variants are required for producing viable conjugation progeny by affecting late developmental stages of conjugation. This chain is Histone H3.3, found in Tetrahymena pyriformis.